We begin with the raw amino-acid sequence, 143 residues long: Large ribosomal subunit protein uL13 (143 aa).

The protein belongs to the universal ribosomal protein uL13 family. As to quaternary structure, part of the 50S ribosomal subunit.

Its function is as follows. This protein is one of the early assembly proteins of the 50S ribosomal subunit, although it is not seen to bind rRNA by itself. It is important during the early stages of 50S assembly. This chain is Large ribosomal subunit protein uL13, found in Symbiobacterium thermophilum (strain DSM 24528 / JCM 14929 / IAM 14863 / T).